The chain runs to 562 residues: Cytosolic Fe-S cluster assembly factor nar1 (562 aa).

Cys20 provides a ligand contact to [4Fe-4S] cluster. Residues 28–47 are disordered; sequence PKNESSNSQNPYEVTTEDKV. The segment covering 29–40 has biased composition (polar residues); it reads KNESSNSQNPYE. 5 residues coordinate [4Fe-4S] cluster: Cys62, Cys65, Cys68, Cys214, and Cys269. The disordered stretch occupies residues 439 to 462; it reads ARVPAASAGGNRRQPISRNSASAG. Residues 452 to 462 are compositionally biased toward polar residues; it reads QPISRNSASAG. Residues Cys475 and Cys479 each coordinate [4Fe-4S] cluster. Disordered regions lie at residues 492–513 and 541–562; these read REAS…PTPH and HSPS…IGLT. The segment covering 494–505 has biased composition (polar residues); sequence ASTSTQSVTAVE.

This sequence belongs to the NARF family.

In terms of biological role, component of the cytosolic Fe/S protein assembly machinery. Required for maturation of extramitochondrial Fe/S proteins. May play a role in the transfer of pre-assembled Fe/S clusters to target apoproteins. The protein is Cytosolic Fe-S cluster assembly factor nar1 (nar1) of Aspergillus flavus (strain ATCC 200026 / FGSC A1120 / IAM 13836 / NRRL 3357 / JCM 12722 / SRRC 167).